A 212-amino-acid polypeptide reads, in one-letter code: Phosphoribosylformylglycinamidine synthase subunit PurQ (212 aa).

In terms of domain architecture, Glutamine amidotransferase type-1 spans 2–212 (RIAVLKFPGT…WLGLISWLRR (211 aa)). Cys85 functions as the Nucleophile in the catalytic mechanism. Active-site residues include His183, Glu185, and His191.

In terms of assembly, part of the FGAM synthase complex composed of 1 PurL, 1 PurQ and 2 PurS subunits.

The protein localises to the cytoplasm. The enzyme catalyses N(2)-formyl-N(1)-(5-phospho-beta-D-ribosyl)glycinamide + L-glutamine + ATP + H2O = 2-formamido-N(1)-(5-O-phospho-beta-D-ribosyl)acetamidine + L-glutamate + ADP + phosphate + H(+). The catalysed reaction is L-glutamine + H2O = L-glutamate + NH4(+). It functions in the pathway purine metabolism; IMP biosynthesis via de novo pathway; 5-amino-1-(5-phospho-D-ribosyl)imidazole from N(2)-formyl-N(1)-(5-phospho-D-ribosyl)glycinamide: step 1/2. Part of the phosphoribosylformylglycinamidine synthase complex involved in the purines biosynthetic pathway. Catalyzes the ATP-dependent conversion of formylglycinamide ribonucleotide (FGAR) and glutamine to yield formylglycinamidine ribonucleotide (FGAM) and glutamate. The FGAM synthase complex is composed of three subunits. PurQ produces an ammonia molecule by converting glutamine to glutamate. PurL transfers the ammonia molecule to FGAR to form FGAM in an ATP-dependent manner. PurS interacts with PurQ and PurL and is thought to assist in the transfer of the ammonia molecule from PurQ to PurL. The chain is Phosphoribosylformylglycinamidine synthase subunit PurQ from Pyrobaculum aerophilum (strain ATCC 51768 / DSM 7523 / JCM 9630 / CIP 104966 / NBRC 100827 / IM2).